The primary structure comprises 150 residues: Anthrone oxygenase gedH (150 aa).

Transmembrane regions (helical) follow at residues 1-21, 41-61, 73-93, and 128-148; these read MANPAVGAMMGLSLVAVPVFL, GHKLMPTIAVATCALHGWVAA, PVLAAVTTITMVPFTWVCMVS, and LFPLAGAIVACQTLLKELVGG.

It belongs to the anthrone oxygenase family.

Its subcellular location is the membrane. The enzyme catalyses emodin anthrone + O2 = emodin + H2O + H(+). The protein operates within secondary metabolite biosynthesis. Its function is as follows. Anthrone oxygenase; part of the gene cluster that mediates the biosynthesis of geodin, an intermediate in the biosynthesis of other natural products. The pathway begins with the synthesis of atrochrysone thioester by the polyketide synthase (PKS) gedC. The atrochrysone carboxyl ACP thioesterase gedB then breaks the thioester bond and releases the atrochrysone carboxylic acid from gedC. The atrochrysone carboxylic acid is then converted to atrochrysone which is further transformed into emodin anthrone. The next step is performed by the emodin anthrone oxygenase gedH that catalyzes the oxidation of emodinanthrone to emodin. Emodin O-methyltransferase encoded probably by gedA then catalyzes methylation of the 8-hydroxy group of emodin to form questin. Ring cleavage of questin by questin oxidase gedK leads to desmethylsulochrin via several intermediates including questin epoxide. Another methylation step probably catalyzed by methyltransferase gedG leads to the formation of sulochrin which is further converted to dihydrogeodin by the sulochrin halogenase gedL. Finally, the dihydrogeodin oxidase gedJ catalyzes the stereospecific phenol oxidative coupling reaction converting dihydrogeodin to geodin. This Aspergillus terreus (strain NIH 2624 / FGSC A1156) protein is Anthrone oxygenase gedH.